Consider the following 944-residue polypeptide: Protein unc-45 homolog A (944 aa).

Residues 1 to 25 (MTVSGPGTPEPRPSDPGASSAEELR) are disordered. TPR repeat units lie at residues 21 to 54 (AEELRKEGNELFKCGDYEGALTAYTQALSLGATP), 58 to 91 (AILHRNRAACHLKLEDYSKAESEASKAIEKDGGD), and 92 to 125 (VKALYRRSQALEKLGRLDQAVLDLKRCVSLEPKN). Lys70 carries the N6-acetyllysine modification. The residue at position 483 (Lys483) is an N6-acetyllysine.

Interacts with PGR isoforms A and B as well as with NR3C1 in the absence of ligand, and with HSP90AB1. Binding to HSP90AB1 involves 2 UNC45A monomers per HSP90AB1 dimer.

Its subcellular location is the cytoplasm. It is found in the perinuclear region. It localises to the nucleus. Functionally, may act as co-chaperone for HSP90 (Potential). Prevents the stimulation of HSP90AB1 ATPase activity by AHSA1. Positive factor in promoting PGR function in the cell. May be necessary for proper folding of myosin (Potential). Necessary for normal cell proliferation. Necessary for normal myotube formation and myosin accumulation during muscle cell development. May play a role in erythropoiesis in stroma cells in the spleen. The protein is Protein unc-45 homolog A (Unc45a) of Rattus norvegicus (Rat).